The primary structure comprises 270 residues: Protein-ADP-ribose hydrolase (270 aa).

A Macro domain is found at 73–267 (VSVKDCQKTN…LYDTYLQKEN (195 aa)). The ADP-D-ribose site is built by Asp-92, Ile-93, and Asn-106. Cys-112, His-117, and Cys-119 together coordinate Zn(2+). Residues Cys-119, Ile-120, Asp-121, Ser-212, Thr-213, Gly-214, Glu-215, and Phe-216 each coordinate ADP-D-ribose.

Belongs to the MacroD-type family. Zn-Macro subfamily. It depends on Zn(2+) as a cofactor.

It carries out the reaction 4-O-(ADP-D-ribosyl)-L-aspartyl-[protein] + H2O = L-aspartyl-[protein] + ADP-D-ribose + H(+). In terms of biological role, ADP-ribosylhydrolase that specifically reverses the SirTM-mediated mono-ADP-ribosylation at an asparatate residue of GcvH-L, by releasing ADP-ribose from the target protein. May play a role in the regulation of the response to host-induced oxidative stress. This is Protein-ADP-ribose hydrolase from Streptococcus pyogenes serotype M1.